A 474-amino-acid chain; its full sequence is PRAME family member 17 (474 aa).

Residues 97-124 (RWKLQVLDLRDVDGNFWTIWSGARALSC) form an LRR 1; degenerate repeat. The LRR 2; degenerate repeat unit spans residues 179–203 (HLCCNKVQNYSMPTSSFRNLLKRVY). One copy of the LRR 3; degenerate repeat lies at 204–230 (PDSIQELEIKRKCSLNKTGKFAPYLSQ). The LRR 4; degenerate repeat unit spans residues 231–265 (MSNLRKLFLAFGYDDELYVSGQQQFVPDLDCPFLC). 5 LRR repeats span residues 266–291 (LYYPQMLYIRKISNIKEHLEHLLRCL), 292–323 (KNPLGTFIFCHAYLADQDMECLSQYPSLSQLK), 324–342 (ELHLIHILMWTTNLEPLGA), 348–375 (AATLEILTLKDCQIQDSQLRVLLPALSR), and 376–400 (CSQLTTFYFRGNETSTNALKDLLCH).

It belongs to the PRAME family.

The sequence is that of PRAME family member 17 from Homo sapiens (Human).